The primary structure comprises 223 residues: Endonuclease V (223 aa).

2 residues coordinate Mg(2+): D35 and D103.

Belongs to the endonuclease V family. It depends on Mg(2+) as a cofactor.

It localises to the cytoplasm. It carries out the reaction Endonucleolytic cleavage at apurinic or apyrimidinic sites to products with a 5'-phosphate.. Its function is as follows. DNA repair enzyme involved in the repair of deaminated bases. Selectively cleaves double-stranded DNA at the second phosphodiester bond 3' to a deoxyinosine leaving behind the intact lesion on the nicked DNA. This Shigella flexneri serotype 5b (strain 8401) protein is Endonuclease V.